The following is a 258-amino-acid chain: MLAKRIIPCLDVRDGQVVKGVQFRNHEIIGDIVPLAKRYAEEGADELVFYDITASSDGRVVDKSWVSRVAEVIDIPFCVAGGIKSLEDAAKILSFGADKISINSPALADPTLITRLADRFGVQCIVVGIDTWYDAETGKYHVNQYTGDESRTRVTQWETLDWVEEVQKRGAGEIVLNMMNQDGVRNGYDLEQLKKVREVCHVPLIASGGAGTMEHFLEAFRDADVDGALAASVFHKQIINIGELKAYLATQGVEIRIC.

Residues aspartate 11 and aspartate 130 contribute to the active site.

It belongs to the HisA/HisF family. Heterodimer of HisH and HisF.

It is found in the cytoplasm. It catalyses the reaction 5-[(5-phospho-1-deoxy-D-ribulos-1-ylimino)methylamino]-1-(5-phospho-beta-D-ribosyl)imidazole-4-carboxamide + L-glutamine = D-erythro-1-(imidazol-4-yl)glycerol 3-phosphate + 5-amino-1-(5-phospho-beta-D-ribosyl)imidazole-4-carboxamide + L-glutamate + H(+). The protein operates within amino-acid biosynthesis; L-histidine biosynthesis; L-histidine from 5-phospho-alpha-D-ribose 1-diphosphate: step 5/9. IGPS catalyzes the conversion of PRFAR and glutamine to IGP, AICAR and glutamate. The HisF subunit catalyzes the cyclization activity that produces IGP and AICAR from PRFAR using the ammonia provided by the HisH subunit. In Escherichia coli O1:K1 / APEC, this protein is Imidazole glycerol phosphate synthase subunit HisF.